The chain runs to 209 residues: Transcription factor 23 (209 aa).

Disordered regions lie at residues 1–20 and 54–85; these read MSQE…GHNK and LSRA…ARER. Over residues 72-85 the composition is skewed to basic and acidic residues; the sequence is GRSEASPENAARER. A bHLH domain is found at 75-127; sequence EASPENAARERTRVKTLRQAFLALQAALPAVPPDTKLSKLDVLVLATSYIAHL.

As to quaternary structure, forms inactive heterodimeric complex with TCF3. As to expression, highly expressed in the uterus (predominantly in myometrium), ovary, and testis. Expression in the uterus is higher in the diestrus phase than in the estrus phase and reaches a maximum at 7.5 dpc. Expression declines towards the time of delivery and returns to the non-pregnant level 4 days after delivery. Low expression seen in lung, heart, intestine, and spleen.

It localises to the nucleus. In terms of biological role, inhibits E-box-mediated binding and transactivation of bHLH factors. Inhibitory effect is similar to that of ID proteins. Inhibits the formation of TCF3 and MYOD1 homodimers and heterodimers. Lacks DNA binding activity. May be involved in the regulation or modulation of smooth muscle contraction of the uterus during pregnancy and particularly around the time of delivery. Seems to play a role in the inhibition of myogenesis. This Mus musculus (Mouse) protein is Transcription factor 23 (Tcf23).